The sequence spans 566 residues: Arginine--tRNA ligase (566 aa).

The short motif at 121–131 is the 'HIGH' region element; the sequence is PNIAKPMSMGH.

Belongs to the class-I aminoacyl-tRNA synthetase family. As to quaternary structure, monomer.

The protein localises to the cytoplasm. It catalyses the reaction tRNA(Arg) + L-arginine + ATP = L-arginyl-tRNA(Arg) + AMP + diphosphate. This is Arginine--tRNA ligase from Oenococcus oeni (strain ATCC BAA-331 / PSU-1).